The following is a 357-amino-acid chain: MADAATITKLEEGFKKLEAATDCKSLLKKYLTKSVFDQLKAKKTSLGATLLDVIQSGVENLDSGVGVYAPDAEAYTLFSPLFDPIIEDYHKGFKQTDKHPNKDFGDVNQFVNVDPDGKFVISTRVRCGRSMEGYPFNPCLTEAQYKEMESKVSSTLSNLEGELKGTYHALTGMTKDVQQKLIDDHFLFKEGDRFLQAANACRYWPTGRGIYHNDNKTFLVWCNEEDHLRIISMQMGGDLGQVYRRLVTAVNDIEKRVPFSHHDRLGFLTFCPTNLGTTVRASVHIKLPKLAANRDKLEEVAGKYSLQVRGTRGEHTEAEGGVYDISNKRRMGLTEFQAVKEMQDGILELIKIEKEMQ.

At alanine 2 the chain carries N-acetylalanine. One can recognise a Phosphagen kinase N-terminal domain in the interval 9-91 (KLEEGFKKLE…FDPIIEDYHK (83 aa)). 64–68 (GVGVY) contacts L-arginine. Residues 119–356 (FVISTRVRCG…LELIKIEKEM (238 aa)) enclose the Phosphagen kinase C-terminal domain. ATP-binding positions include 122–126 (STRVR) and histidine 185. Position 225 (glutamate 225) interacts with L-arginine. An ATP-binding site is contributed by arginine 229. L-arginine is bound at residue cysteine 271. Residues 280-284 (RASVH) and 309-314 (RGTRGE) contribute to the ATP site. Residue glutamate 314 coordinates L-arginine.

This sequence belongs to the ATP:guanido phosphotransferase family.

The enzyme catalyses L-arginine + ATP = N(omega)-phospho-L-arginine + ADP + H(+). This Carcinus maenas (Common shore crab) protein is Arginine kinase.